A 180-amino-acid polypeptide reads, in one-letter code: Large ribosomal subunit protein uL6 (180 aa).

It belongs to the universal ribosomal protein uL6 family. As to quaternary structure, part of the 50S ribosomal subunit.

Functionally, this protein binds to the 23S rRNA, and is important in its secondary structure. It is located near the subunit interface in the base of the L7/L12 stalk, and near the tRNA binding site of the peptidyltransferase center. The polypeptide is Large ribosomal subunit protein uL6 (Picrophilus torridus (strain ATCC 700027 / DSM 9790 / JCM 10055 / NBRC 100828 / KAW 2/3)).